The sequence spans 352 residues: Ion-translocating oxidoreductase complex subunit D (352 aa).

A run of 4 helical transmembrane segments spans residues 20–40 (IMLL…CFFG), 42–62 (GTLV…ALVL), 89–109 (IPPL…VIIA), and 123–143 (PAMI…TSWL). T187 carries the post-translational modification FMN phosphoryl threonine. 5 consecutive transmembrane segments (helical) span residues 215 to 235 (LAGA…VWLL), 242 to 262 (WHIP…GWLF), 267 to 287 (LAAP…FFIL), 301 to 321 (LIFG…GGYP), and 322 to 342 (DGVA…DYYT).

It belongs to the NqrB/RnfD family. As to quaternary structure, the complex is composed of six subunits: RsxA, RsxB, RsxC, RsxD, RsxE and RsxG. It depends on FMN as a cofactor.

It is found in the cell inner membrane. In terms of biological role, part of a membrane-bound complex that couples electron transfer with translocation of ions across the membrane. Required to maintain the reduced state of SoxR. The polypeptide is Ion-translocating oxidoreductase complex subunit D (Escherichia coli O7:K1 (strain IAI39 / ExPEC)).